Consider the following 407-residue polypeptide: MSLGIRYLALLPLFVITACQQPVNYNPPATQVAQVQPAIVNNSWIEISRSALDFNVKKVQSLLGKQSSLCAVLKGDAYGHDLSLVAPIMIENNVKCIGVTNNQELKEVRDLGFKGRLMRVRNATEQEMAQATNYNVEELIGDLDMAKRLDAIAKQQNKVIPIHLALNSGGMSRNGLEVDNKSGLEKAKQISQLANLKVVGIMSHYPEEDANKVREDLARFKQQSQQVLEVMGLERNNVTLHMANTFATITVPESWLDMVRVGGIFYGDTIASTDYKRVMTFKSNIASINYYPKGNTVGYDRTYTLKRDSVLANIPVGYADGYRRVFSNAGHALIAGQRVPVLGKTSMNTVIVDITSLNNIKPGDEVVFFGKQGNSEITAEEIEDISGALFTEMSILWGATNQRVLVD.

Residues 1–18 form the signal peptide; the sequence is MSLGIRYLALLPLFVITA. The N-palmitoyl cysteine moiety is linked to residue C19. C19 is lipidated: S-diacylglycerol cysteine. C70 and C96 are joined by a disulfide. The Proton acceptor role is filled by K74. K74 is subject to N6-(pyridoxal phosphate)lysine. R173 lines the substrate pocket. The Proton acceptor role is filled by Y299. M347 provides a ligand contact to substrate.

It belongs to the alanine racemase family. Bsr subfamily. Forms a head-to-tail homodimer in the structure. Pyridoxal 5'-phosphate serves as cofactor.

It localises to the cell membrane. The protein localises to the periplasm. The enzyme catalyses L-lysine = D-lysine. It carries out the reaction L-arginine = D-arginine. Its activity is regulated as follows. The racemization activity of Lyr is completely inhibited by hydroxylamine. Its function is as follows. Amino-acid racemase that catalyzes the interconversion of L-lysine and D-lysine. To a lesser extent, is also able to interconvert arginine enantiomers. Cannot use methionine, asparagine, alanine, leucine, glutamine, phenylalanine and histidine as substrates. The polypeptide is Lysine racemase (Proteus mirabilis).